A 238-amino-acid polypeptide reads, in one-letter code: Fatty acid metabolism regulator protein (238 aa).

The 69-residue stretch at 6 to 74 folds into the HTH gntR-type domain; it reads KGPASFAEKY…HGKPTRVNNF (69 aa). Positions 34–53 form a DNA-binding region, H-T-H motif; it reads ERELSELIGVTRTTLREVLQ.

Homodimer.

Its subcellular location is the cytoplasm. Functionally, multifunctional regulator of fatty acid metabolism. The protein is Fatty acid metabolism regulator protein of Shewanella baltica (strain OS185).